The following is a 235-amino-acid chain: Secretory carrier-associated membrane protein 5B (235 aa).

Residues 1-39 (MSDKPNNFPPLPRFIPLKPCFYQDFDTDIPDVHRTTAKR) lie on the Cytoplasmic side of the membrane. The helical transmembrane segment at 40-60 (LYYLWMLNSITLGVNLIGCLA) threads the bilayer. At 61-67 (WLIGGGG) the chain is on the extracellular side. Residues 68 to 88 (ATNFGLAFLWLILFTPCSYVC) traverse the membrane as a helical segment. Over 89–102 (WFRPIYKAFKTDSS) the chain is Cytoplasmic. A helical membrane pass occupies residues 103-125 (FNFMAFFFTFTGQLVISIIQAVG). At 126–148 (IPGWGVCGWIASISFFGTNVGSA) the chain is on the extracellular side. The chain crosses the membrane as a helical span at residues 149-169 (VVMLIPTIMFTAVAVLSFVAL). The Cytoplasmic segment spans residues 170 to 235 (TKVHRFYRGA…TPNYGYSNQM (66 aa)).

Belongs to the SCAMP family. SCAMP5 subfamily.

It localises to the cell membrane. It is found in the golgi apparatus membrane. Its subcellular location is the golgi apparatus. The protein localises to the trans-Golgi network membrane. The protein resides in the recycling endosome membrane. It localises to the cytoplasmic vesicle. It is found in the secretory vesicle. Its subcellular location is the synaptic vesicle membrane. Its function is as follows. Required for the calcium-dependent exocytosis of signal sequence-containing cytokines. Probably acts in cooperation with the SNARE machinery. This chain is Secretory carrier-associated membrane protein 5B (scamp5-b), found in Xenopus laevis (African clawed frog).